We begin with the raw amino-acid sequence, 125 residues long: Diol dehydratase-reactivating factor small subunit (125 aa).

Glu31 provides a ligand contact to Mg(2+).

This sequence belongs to the DdrB/PduH family. In terms of assembly, component of the DDR complex, a heterotetramer of DdrA(2)/DdrB(2). The DDR complex interacts with the diol dehydratase complex in the presence of ADP but not ATP. Requires Mg(2+) as cofactor.

It carries out the reaction ATP + H2O = ADP + phosphate + H(+). Its function is as follows. Small subunit of the diol dehydratase-reactivating factor (DDR), which reactivates suicidally inhibited adenosylcobalamin-dependent diol dehydratase (DD, pddA, pddB, pddC). DDR acts as a chaperone, reactivates inactivated DD holoenzyme in the presence of ATP, Mg(2+) and free adenosylcobalamin (AdoCbl), by mediating the exchange of the tightly bound damaged cofactor AdoCbl for a free intact one. Reactivation takes place in two steps: ADP-dependent cobalamin release, and ATP-dependent dissociation of the DD apoenzyme-DDR complex. DDR has weak ATPase activity which is required for DD reactivation. Activates glycerol-inactivated, O2-inactivated holoenzyme and inactivated enzyme-cyanocobalamin complex. Also reactivates glycerol-inactivated hologlycerol dehydratase, a DD isozyme. The polypeptide is Diol dehydratase-reactivating factor small subunit (Klebsiella michiganensis (strain ATCC 8724 / DSM 4798 / JCM 20051 / NBRC 3318 / NRRL B-199 / KCTC 1686 / BUCSAV 143 / CCM 1901)).